A 287-amino-acid chain; its full sequence is Acetylglutamate kinase (287 aa).

Substrate is bound by residues 65–66 (GG), R87, and N181.

Belongs to the acetylglutamate kinase family. ArgB subfamily.

It localises to the cytoplasm. It carries out the reaction N-acetyl-L-glutamate + ATP = N-acetyl-L-glutamyl 5-phosphate + ADP. Its pathway is amino-acid biosynthesis; L-arginine biosynthesis; N(2)-acetyl-L-ornithine from L-glutamate: step 2/4. Its function is as follows. Catalyzes the ATP-dependent phosphorylation of N-acetyl-L-glutamate. The sequence is that of Acetylglutamate kinase from Syntrophomonas wolfei subsp. wolfei (strain DSM 2245B / Goettingen).